The primary structure comprises 509 residues: tRNA (guanine(37)-N(1))-methyltransferase (509 aa).

The N-terminal 57 residues, 1 to 57 (MVLWILWRPFGFSRRLLKLERHSITESKSLIPLAWTSLTQTLSESPGIFLLGQRKRF), are a transit peptide targeting the mitochondrion. Residues His-289, 327 to 328 (DL), 355 to 356 (DG), and Asn-387 each bind S-adenosyl-L-methionine. The interval 478-509 (TKNPENHEDPPLKRQRTAEAFSDEKTQIASNT) is disordered.

It belongs to the class I-like SAM-binding methyltransferase superfamily. TRM5/TYW2 family. In terms of assembly, monomer.

The protein localises to the mitochondrion matrix. The protein resides in the nucleus. Its subcellular location is the cytoplasm. It carries out the reaction guanosine(37) in tRNA + S-adenosyl-L-methionine = N(1)-methylguanosine(37) in tRNA + S-adenosyl-L-homocysteine + H(+). Functionally, involved in mitochondrial tRNA methylation. Specifically methylates the N1 position of guanosine-37 in various tRNAs. Methylation is not dependent on the nature of the nucleoside 5' of the target nucleoside. This is the first step in the biosynthesis of wybutosine (yW), a modified base adjacent to the anticodon of tRNAs and required for accurate decoding. In Macaca fascicularis (Crab-eating macaque), this protein is tRNA (guanine(37)-N(1))-methyltransferase.